The chain runs to 425 residues: Cysteate synthase (425 aa).

The residue at position 106 (Lys106) is an N6-(pyridoxal phosphate)lysine. Residues Asn132 and Thr382 each contribute to the pyridoxal 5'-phosphate site.

Belongs to the threonine synthase family. Cysteate synthase subfamily. As to quaternary structure, homotrimer. Pyridoxal 5'-phosphate is required as a cofactor.

It carries out the reaction O-phospho-L-serine + sulfite + H(+) = L-cysteate + phosphate. It participates in cofactor biosynthesis; coenzyme M biosynthesis. Its function is as follows. Specifically catalyzes the beta-elimination of phosphate from L-phosphoserine and the beta-addition of sulfite to the dehydroalanine intermediate to produce L-cysteate. The chain is Cysteate synthase from Methanosphaerula palustris (strain ATCC BAA-1556 / DSM 19958 / E1-9c).